Consider the following 269-residue polypeptide: MNSLSTEQLGIGYGDRVIVEDLNISIPKGKITTLIGPNGCGKSTILKTMSRIMRSHAGAVYLNGKAIHKMSTKDIAKDMAILPQTPEAPSGLTVHELVSYGRFPHQSGFGRLNDEDRRIIKWALEETGMAEYAERPIEALSGGQRQRVWIAMALAQGTELLLLDEPTTYLDLAHQLEILQLLDRLNKEQGRTILMVIHDLNHAARFSHYMIALKKGTVIKEGTALEVMTPDILKQVFQIDAEIVTDPRTNKPVCLTYDLIKNEKELVTV.

The ABC transporter domain maps to 4 to 240; that stretch reads LSTEQLGIGY…DILKQVFQID (237 aa). ATP-binding positions include 36-43 and 160-171; these read GPNGCGKS and LLLLDEPTTYLD.

It belongs to the ABC transporter superfamily. Iron (Fe3+)-hydroxamate importer (TC 3.A.1.14.7) family. As to quaternary structure, the complex is composed of an ATP-binding protein (FhuC), two transmembrane proteins (FhuB and FhuG) and a solute-binding protein (FhuD or YxeB).

It is found in the cell membrane. It carries out the reaction ATP + H2O + Fe(3+)-hydroxamate complex-[hydroxamate-binding protein]Side 1 = ADP + phosphate + Fe(3+)-hydroxamate complexSide 2 + [hydroxamate-binding protein]Side 1.. In terms of biological role, part of the ABC transporter complex FhuBGCD involved in iron(3+)-hydroxamate import. Responsible for energy coupling to the transport system. This Bacillus subtilis (strain 168) protein is Iron(3+)-hydroxamate import ATP-binding protein FhuC (fhuC).